Here is a 1160-residue protein sequence, read N- to C-terminus: MDKLERIELESQVCNELERFIGSGDKLLAEFVIGLADENPKLKDFNKAISENVPDFPESLSSHLFNLIEKMKKKTTTTTNNNNNNNNNNTNTAKTTTTTTTTTTTTNNNNYKESEWEETKLNSNSNNQKKNQFPGLSIPNKVEWDQGKIVDVPIDDEKTKEELKRKQQDMDREFEREQREKRDRDREQQNKRREIDKEPILYKIYDGKVSSINDYGCFVTLEGIAGRRDGLVHISQILSGRTKLNHPSDVVKRNQQVKVKILSVASSKISLSMKDVDQSTGRDLNPQQNIQSIISTNSTNNRSNPFKPNNNNNNSSNNNNNDDDDKYTTSKNRKRIASPDRWGYKQLIASGILSVPEMPNYDKEVGLVNHDEEQPEEDFDIERNEDEPQFLKGTRMNMQQLSPIKIVKKPNGSLQRAASTQTALSKERKEEKNQQRNEMMDSIPKDLSLPWHDPMPEAGERHLAQEIRSIAGQGIDTEIPEWKKVTQGSHIQYGKATSRSIKEQRESLPIFPLREAFLQAVSEHQLLVVIGETGSGKTTQMAQYLAEAGYGTRGKIGCTQPRRVAAMSVSKRVAEEFGCQLGQEVGYAIRFEDCTSPETIIKFMTDGILLRECLLDPNLSAYSVIILDEAHERTISTDVLFGLLKQALQRRPELKVLITSATLEAEKFSKYFMNAQLFIIPGRTFPVDIRYTKDPEADYLDASLITVMQIHLSEPPGDILLFLTGQEEIDAACQILYERMKSLGSNVPDLIILPVYSALPSEMQTKIFEPAPPGSRKVVIATNIAETSLTIDGIYYVIDPGFSKQKCFNPKNGMDSLVVAPISQAAARQRSGRAGRTGPGKCYRLYTESAFKNEMLASSIPEIQRTNLGNTVLTMKAMGINDLLNFDFMDPPPVQTLVSAMEQLYSLGALDEEGLLTRLGRKMAEFPLDPQLSKMLIASVDLGCSDEILTVVAMLSVQNVFYRPKEKQALADQKKAKFFQPEGDHLTLLNVYESWKNSKFSNPWCFENFVQARSLRRAQDVRKQLITIMDRYKLDIISAGRNYTKIQKAICSGFFANASKKDPNEGYKTLVEGQPVYIHPSSTLFNRNPDWVIYHELVMTTKEYMREVCTIDPKWLVELAPKFFKTSDPNKISKRKRKEKIEPLYDKYNDPNAWRPSKRK.

Disordered stretches follow at residues 75-140 (TTTT…SIPN) and 153-192 (PIDDEKTKEELKRKQQDMDREFEREQREKRDRDREQQNKR). Composition is skewed to low complexity over residues 76–110 (TTTTNNNNNNNNNNTNTAKTTTTTTTTTTTTNNNN) and 122–132 (NSNSNNQKKNQ). The span at 155-192 (DDEKTKEELKRKQQDMDREFEREQREKRDRDREQQNKR) shows a compositional bias: basic and acidic residues. Positions 202 to 274 (YKIYDGKVSS…ASSKISLSMK (73 aa)) constitute an S1 motif domain. Low complexity predominate over residues 294-320 (ISTNSTNNRSNPFKPNNNNNNSSNNNN). 2 disordered regions span residues 294–334 (ISTN…KNRK) and 409–438 (KPNGSLQRAASTQTALSKERKEEKNQQRNE). Residues 412-424 (GSLQRAASTQTAL) show a composition bias toward polar residues. Residues 425-438 (SKERKEEKNQQRNE) are compositionally biased toward basic and acidic residues. One can recognise a Helicase ATP-binding domain in the interval 518 to 681 (LQAVSEHQLL…FMNAQLFIIP (164 aa)). 531-538 (GETGSGKT) lines the ATP pocket. Positions 628 to 631 (DEAH) match the DEAH box motif. Residues 699–879 (YLDASLITVM…NTVLTMKAMG (181 aa)) enclose the Helicase C-terminal domain.

Belongs to the DEAD box helicase family. DEAH subfamily. DDX8/PRP22 sub-subfamily. Identified in the spliceosome complex.

It localises to the nucleus. It carries out the reaction ATP + H2O = ADP + phosphate + H(+). Facilitates nuclear export of spliced mRNA by releasing the RNA from the spliceosome. The sequence is that of ATP-dependent RNA helicase dhx8 (dhx8) from Dictyostelium discoideum (Social amoeba).